The primary structure comprises 311 residues: HPr kinase/phosphorylase (311 aa).

Catalysis depends on residues histidine 139 and lysine 160. 154-161 (GASGVGKS) provides a ligand contact to ATP. Residue serine 161 coordinates Mg(2+). Aspartate 178 (proton acceptor; for phosphorylation activity. Proton donor; for dephosphorylation activity) is an active-site residue. The interval 202–211 (LEIRGIGIID) is important for the catalytic mechanism of both phosphorylation and dephosphorylation. Mg(2+) is bound at residue glutamate 203. Arginine 244 is an active-site residue. The interval 265–270 (PVRPGR) is important for the catalytic mechanism of dephosphorylation.

This sequence belongs to the HPrK/P family. As to quaternary structure, homohexamer. The cofactor is Mg(2+).

It carries out the reaction [HPr protein]-L-serine + ATP = [HPr protein]-O-phospho-L-serine + ADP + H(+). It catalyses the reaction [HPr protein]-O-phospho-L-serine + phosphate + H(+) = [HPr protein]-L-serine + diphosphate. Catalyzes the ATP- as well as the pyrophosphate-dependent phosphorylation of a specific serine residue in HPr, a phosphocarrier protein of the phosphoenolpyruvate-dependent sugar phosphotransferase system (PTS). HprK/P also catalyzes the pyrophosphate-producing, inorganic phosphate-dependent dephosphorylation (phosphorolysis) of seryl-phosphorylated HPr (P-Ser-HPr). The two antagonistic activities of HprK/P are regulated by several intracellular metabolites, which change their concentration in response to the absence or presence of rapidly metabolisable carbon sources (glucose, fructose, etc.) in the growth medium. Therefore, by controlling the phosphorylation state of HPr, HPrK/P is a sensor enzyme that plays a major role in the regulation of carbon metabolism and sugar transport: it mediates carbon catabolite repression (CCR), and regulates PTS-catalyzed carbohydrate uptake and inducer exclusion. This Exiguobacterium sibiricum (strain DSM 17290 / CCUG 55495 / CIP 109462 / JCM 13490 / 255-15) protein is HPr kinase/phosphorylase.